The following is a 126-amino-acid chain: Aspartate 1-decarboxylase (126 aa).

The Schiff-base intermediate with substrate; via pyruvic acid role is filled by S25. S25 bears the Pyruvic acid (Ser) mark. T57 contributes to the substrate binding site. Y58 serves as the catalytic Proton donor. 73 to 75 contacts substrate; the sequence is GAA.

This sequence belongs to the PanD family. Heterooctamer of four alpha and four beta subunits. Pyruvate serves as cofactor. In terms of processing, is synthesized initially as an inactive proenzyme, which is activated by self-cleavage at a specific serine bond to produce a beta-subunit with a hydroxyl group at its C-terminus and an alpha-subunit with a pyruvoyl group at its N-terminus.

Its subcellular location is the cytoplasm. The enzyme catalyses L-aspartate + H(+) = beta-alanine + CO2. Its pathway is cofactor biosynthesis; (R)-pantothenate biosynthesis; beta-alanine from L-aspartate: step 1/1. Its function is as follows. Catalyzes the pyruvoyl-dependent decarboxylation of aspartate to produce beta-alanine. This is Aspartate 1-decarboxylase from Methylobacillus flagellatus (strain ATCC 51484 / DSM 6875 / VKM B-1610 / KT).